A 778-amino-acid polypeptide reads, in one-letter code: 5-methyltetrahydropteroyltriglutamate--homocysteine methyltransferase (778 aa).

5-methyltetrahydropteroyltri-L-glutamate-binding positions include 17-20 and K118; that span reads RELK. Residues 436–438 and E489 each bind L-homocysteine; that span reads IGS. Residues 436–438 and E489 each bind L-methionine; that span reads IGS. Residues 520-521 and W566 each bind 5-methyltetrahydropteroyltri-L-glutamate; that span reads RC. L-homocysteine is bound at residue D604. D604 provides a ligand contact to L-methionine. E610 lines the 5-methyltetrahydropteroyltri-L-glutamate pocket. Zn(2+)-binding residues include H646, C648, and E670. H699 (proton donor) is an active-site residue. C731 provides a ligand contact to Zn(2+).

The protein belongs to the vitamin-B12 independent methionine synthase family. Zn(2+) is required as a cofactor.

The enzyme catalyses 5-methyltetrahydropteroyltri-L-glutamate + L-homocysteine = tetrahydropteroyltri-L-glutamate + L-methionine. It participates in amino-acid biosynthesis; L-methionine biosynthesis via de novo pathway; L-methionine from L-homocysteine (MetE route): step 1/1. Functionally, catalyzes the transfer of a methyl group from 5-methyltetrahydrofolate to homocysteine resulting in methionine formation. The polypeptide is 5-methyltetrahydropteroyltriglutamate--homocysteine methyltransferase (Vibrio vulnificus (strain CMCP6)).